The primary structure comprises 388 residues: S-adenosylmethionine synthase 1 (388 aa).

E11 contributes to the Mg(2+) binding site. H17 serves as a coordination point for ATP. E45 contributes to the K(+) binding site. Positions 58 and 101 each coordinate L-methionine. ATP contacts are provided by residues D168–K170, S233–F236, D244, R250–K251, A267, K271, and K275. D244 contributes to the L-methionine binding site. K275 contacts L-methionine.

Belongs to the AdoMet synthase family. In terms of assembly, homotetramer. The cofactor is Mn(2+). Mg(2+) is required as a cofactor. It depends on Co(2+) as a cofactor. K(+) serves as cofactor. As to expression, mostly in Roots.

It is found in the cytoplasm. The catalysed reaction is L-methionine + ATP + H2O = S-adenosyl-L-methionine + phosphate + diphosphate. The protein operates within amino-acid biosynthesis; S-adenosyl-L-methionine biosynthesis; S-adenosyl-L-methionine from L-methionine: step 1/1. Functionally, catalyzes the formation of S-adenosylmethionine from methionine and ATP. The reaction comprises two steps that are both catalyzed by the same enzyme: formation of S-adenosylmethionine (AdoMet) and triphosphate, and subsequent hydrolysis of the triphosphate. The polypeptide is S-adenosylmethionine synthase 1 (SAMS1) (Pinus contorta (Shore pine)).